A 362-amino-acid polypeptide reads, in one-letter code: DNA replication and repair protein RecF (362 aa).

Position 30-37 (30-37 (GLNAQGKS)) interacts with ATP.

Belongs to the RecF family.

Its subcellular location is the cytoplasm. Its function is as follows. The RecF protein is involved in DNA metabolism; it is required for DNA replication and normal SOS inducibility. RecF binds preferentially to single-stranded, linear DNA. It also seems to bind ATP. This is DNA replication and repair protein RecF from Thermoanaerobacter sp. (strain X514).